Here is a 914-residue protein sequence, read N- to C-terminus: Translation initiation factor IF-2 (914 aa).

The tract at residues 58–160 (KTEKKQTAKK…EAEPKIEVMP (103 aa)) is disordered. Residues 70 to 91 (KKDTVKKDTVKKTAVKKDDSKA) are compositionally biased toward basic and acidic residues. Positions 92–103 (AKKTKPIAKKSA) are enriched in basic residues. Positions 104 to 160 (PKTEKKVEKKVESKISKPDNEILEAKPEISKPEIKAEPKKEEIEQKQEAEPKIEVMP) are enriched in basic and acidic residues. The 170-residue stretch at 413-582 (ERVPVITIMG…LLQADLLELK (170 aa)) folds into the tr-type G domain. Residues 422–429 (GHVDHGKT) are G1. 422 to 429 (GHVDHGKT) is a GTP binding site. The interval 447 to 451 (GITQH) is G2. A G3 region spans residues 468 to 471 (DTPG). GTP is bound by residues 468–472 (DTPGH) and 522–525 (NKMD). The tract at residues 522-525 (NKMD) is G4. The interval 558-560 (SAK) is G5.

The protein belongs to the TRAFAC class translation factor GTPase superfamily. Classic translation factor GTPase family. IF-2 subfamily.

The protein localises to the cytoplasm. Its function is as follows. One of the essential components for the initiation of protein synthesis. Protects formylmethionyl-tRNA from spontaneous hydrolysis and promotes its binding to the 30S ribosomal subunits. Also involved in the hydrolysis of GTP during the formation of the 70S ribosomal complex. This chain is Translation initiation factor IF-2, found in Campylobacter hominis (strain ATCC BAA-381 / DSM 21671 / CCUG 45161 / LMG 19568 / NCTC 13146 / CH001A).